A 77-amino-acid polypeptide reads, in one-letter code: Translational regulator CsrA (77 aa).

Belongs to the CsrA/RsmA family. Homodimer; the beta-strands of each monomer intercalate to form a hydrophobic core, while the alpha-helices form wings that extend away from the core.

Its subcellular location is the cytoplasm. A translational regulator that binds mRNA to regulate translation initiation and/or mRNA stability. Usually binds in the 5'-UTR at or near the Shine-Dalgarno sequence preventing ribosome-binding, thus repressing translation. Its main target seems to be the major flagellin gene, while its function is anatagonized by FliW. The protein is Translational regulator CsrA of Pseudarthrobacter chlorophenolicus (strain ATCC 700700 / DSM 12829 / CIP 107037 / JCM 12360 / KCTC 9906 / NCIMB 13794 / A6) (Arthrobacter chlorophenolicus).